A 258-amino-acid chain; its full sequence is F-box/LRR-repeat protein 25 (258 aa).

The 50-residue stretch at S27–L76 folds into the F-box domain. LRR repeat units follow at residues C101–F130, C136–P161, R177–F202, and R224–D249.

The sequence is that of F-box/LRR-repeat protein 25 (FBL25) from Arabidopsis thaliana (Mouse-ear cress).